We begin with the raw amino-acid sequence, 249 residues long: Protein obstructor-E (249 aa).

An N-terminal signal peptide occupies residues 1–21 (MAKILISALLCVAMFGSMALG). The Chitin-binding type-2 1 domain occupies 22–80 (SPECPTPNGRFASGDQCDSYTECQDGTPVEKLCPDGLLFHQRTKATGECTYAPYSTCKE). Cysteine 54 and cysteine 70 are oxidised to a cystine. Residue asparagine 88 is glycosylated (N-linked (GlcNAc...) asparagine). Chitin-binding type-2 domains lie at 90-148 (TEEC…SCNA) and 170-227 (VDVS…ECYA). 2 cysteine pairs are disulfide-bonded: cysteine 124-cysteine 137 and cysteine 203-cysteine 216.

In terms of tissue distribution, uniformly expressed throughout the cuticle of third instar larva.

The protein resides in the secreted. Its subcellular location is the extracellular space. The protein localises to the extracellular matrix. Chitin-binding protein that is important for the longitudinal contraction and lateral expansion of the larval cuticle during its conversion into the oval-shaped puparium case. Essential for survival to the second instar larval stage. Confers the orientated contractility and expandability of the larval cuticle by regulating the arrangement of chitin and the formation of supracellular ridges on the cuticle of third instar larvae. Essential for determining pupal body shape; required for the orientated shape change of the cuticle during metamorphosis which involves changes in the morphology of the supracellular ridges. Functionally, mainly involved in regulating pupal shape. Its function is as follows. Mainly involved in larvae survival, possibly by maintaining the normal morphology of the larval hindgut during development. This Drosophila melanogaster (Fruit fly) protein is Protein obstructor-E.